A 25-amino-acid chain; its full sequence is Insulin mimetic protein (25 aa).

A disordered region spans residues 1 to 25; sequence TKDPELKQCKKQQKKQQQYDDDDKK.

In terms of processing, glycosylated. In terms of tissue distribution, expressed in seed.

This Cnidoscolus quercifolius protein is Insulin mimetic protein.